The primary structure comprises 901 residues: Putative receptor protein kinase CRINKLY4 (901 aa).

The signal sequence occupies residues 1–24; sequence MDHVPALVLAGCCFLALLPGWACG. Residues 25-423 are Extracellular-facing; it reads LGSMSSIAVS…SRKLMAFQMR (399 aa). A run of 7 repeats spans residues 33–68, 72–107, 125–160, 162–195, 203–236, 253–287, and 292–330. A 7 X 36 AA repeats region spans residues 33–330; that stretch reads VSYGEDGPVF…PLALPMAVPP (298 aa). 2 N-linked (GlcNAc...) asparagine glycosylation sites follow: N151 and N179. N-linked (GlcNAc...) asparagine glycosylation is present at N282. 3 cysteine pairs are disulfide-bonded: C338–C365, C368–C382, and C372–C390. Residues 357–391 form a TNFR-Cys repeat; that stretch reads CKPANSRLCLPCSTGCPEGLYESSPCNATADRVCQ. The N-linked (GlcNAc...) asparagine glycan is linked to N383. A helical transmembrane segment spans residues 424 to 444; it reads IFVAEIVFAVVLVLSVSVTTC. Over 445–901 the chain is Cytoplasmic; it reads LYVRHKLRHC…QENLYLQHNF (457 aa). The region spanning 505 to 712 is the Protein kinase domain; the sequence is FSEDSQVGKG…EILSGRKAID (208 aa). ATP is bound by residues 511–519 and K533; that span reads VGKGSFSCV. D634 serves as the catalytic Proton acceptor. The interval 845 to 876 is disordered; sequence VTSSQRRKSSASEADIVGRRATDGRNVGSSIG.

It belongs to the protein kinase superfamily. Ser/Thr protein kinase family. In terms of assembly, homodimer.

The protein localises to the cell membrane. It is found in the endosome. The protein resides in the multivesicular body membrane. It carries out the reaction L-seryl-[protein] + ATP = O-phospho-L-seryl-[protein] + ADP + H(+). It catalyses the reaction L-threonyl-[protein] + ATP = O-phospho-L-threonyl-[protein] + ADP + H(+). Its function is as follows. Putative receptor protein kinase. Could play a role in a differentiation signal. The CRINKLY4 (CR4) mutation affects leaf epidermis differentiation such that cell size and morphology are altered, and surface functions are compromised, allowing graft-like fusions between organs. The protein is Putative receptor protein kinase CRINKLY4 (CR4) of Zea mays (Maize).